Here is a 333-residue protein sequence, read N- to C-terminus: D-fructose 1,6-bisphosphatase class 2/sedoheptulose 1,7-bisphosphatase (333 aa).

4 residues coordinate Mn(2+): Asp-33, Glu-57, Asp-85, and Glu-88. Residues 88–90, Tyr-119, 164–166, and 186–188 each bind substrate; these read EGT, RTR, and DGD. Glu-213 is a binding site for Mn(2+).

The protein belongs to the FBPase class 2 family. Homotetramer. Mn(2+) serves as cofactor.

The catalysed reaction is beta-D-fructose 1,6-bisphosphate + H2O = beta-D-fructose 6-phosphate + phosphate. It carries out the reaction D-sedoheptulose 1,7-bisphosphate + H2O = D-sedoheptulose 7-phosphate + phosphate. It participates in carbohydrate biosynthesis; Calvin cycle. Catalyzes the hydrolysis of fructose 1,6-bisphosphate (Fru 1,6-P2) and sedoheptulose 1,7-bisphosphate (Sed 1,7-P2) to fructose 6-phosphate and sedoheptulose 7-phosphate, respectively. The protein is D-fructose 1,6-bisphosphatase class 2/sedoheptulose 1,7-bisphosphatase of Prochlorococcus marinus (strain MIT 9301).